The sequence spans 366 residues: Carbamoyl phosphate synthase small chain (366 aa).

Positions 1-171 (MLEKRYLVLE…KTPYVSTGSD (171 aa)) are CPSase. L-glutamine-binding residues include serine 47, glycine 221, and glycine 223. The Glutamine amidotransferase type-1 domain maps to 173–360 (SVVLLDFGKK…IAMMKDFKEK (188 aa)). Cysteine 248 functions as the Nucleophile in the catalytic mechanism. 5 residues coordinate L-glutamine: leucine 249, glutamine 252, asparagine 290, glycine 292, and tyrosine 293. Catalysis depends on residues histidine 333 and glutamate 335.

The protein belongs to the CarA family. As to quaternary structure, composed of two chains; the small (or glutamine) chain promotes the hydrolysis of glutamine to ammonia, which is used by the large (or ammonia) chain to synthesize carbamoyl phosphate. Tetramer of heterodimers (alpha,beta)4.

The enzyme catalyses hydrogencarbonate + L-glutamine + 2 ATP + H2O = carbamoyl phosphate + L-glutamate + 2 ADP + phosphate + 2 H(+). The catalysed reaction is L-glutamine + H2O = L-glutamate + NH4(+). The protein operates within amino-acid biosynthesis; L-arginine biosynthesis; carbamoyl phosphate from bicarbonate: step 1/1. Its pathway is pyrimidine metabolism; UMP biosynthesis via de novo pathway; (S)-dihydroorotate from bicarbonate: step 1/3. In terms of biological role, small subunit of the glutamine-dependent carbamoyl phosphate synthetase (CPSase). CPSase catalyzes the formation of carbamoyl phosphate from the ammonia moiety of glutamine, carbonate, and phosphate donated by ATP, constituting the first step of 2 biosynthetic pathways, one leading to arginine and/or urea and the other to pyrimidine nucleotides. The small subunit (glutamine amidotransferase) binds and cleaves glutamine to supply the large subunit with the substrate ammonia. The chain is Carbamoyl phosphate synthase small chain from Staphylococcus epidermidis (strain ATCC 12228 / FDA PCI 1200).